Here is a 188-residue protein sequence, read N- to C-terminus: D-glycero-beta-D-manno-heptose-1,7-bisphosphate 7-phosphatase (188 aa).

4 residues coordinate Zn(2+): cysteine 92, histidine 94, cysteine 107, and cysteine 109.

This sequence belongs to the GmhB family.

The protein localises to the cytoplasm. It catalyses the reaction D-glycero-beta-D-manno-heptose 1,7-bisphosphate + H2O = D-glycero-beta-D-manno-heptose 1-phosphate + phosphate. Its pathway is nucleotide-sugar biosynthesis; ADP-L-glycero-beta-D-manno-heptose biosynthesis; ADP-L-glycero-beta-D-manno-heptose from D-glycero-beta-D-manno-heptose 7-phosphate: step 2/4. The protein operates within bacterial outer membrane biogenesis; LPS core biosynthesis. Functionally, converts the D-glycero-beta-D-manno-heptose 1,7-bisphosphate intermediate into D-glycero-beta-D-manno-heptose 1-phosphate by removing the phosphate group at the C-7 position. The protein is D-glycero-beta-D-manno-heptose-1,7-bisphosphate 7-phosphatase (gmhB1) of Photorhabdus laumondii subsp. laumondii (strain DSM 15139 / CIP 105565 / TT01) (Photorhabdus luminescens subsp. laumondii).